A 395-amino-acid polypeptide reads, in one-letter code: XK-related protein 8 (395 aa).

Topologically, residues 1 to 12 (MPWSSRGALLRD) are cytoplasmic. A helical membrane pass occupies residues 13 to 33 (LVLGVLGTAAFLLDLGTDLWA). Topologically, residues 34–47 (AVQYALGGRYLWAA) are extracellular. Residues 48–68 (LVLALLGLASVALQLFSWLWL) form a helical membrane-spanning segment. The Cytoplasmic segment spans residues 69 to 158 (RADPAGLHGS…VLAIMLQSGR (90 aa)). Residues 159-179 (AEYYQWVGICTSFLGISWALL) traverse the membrane as a helical segment. Residues 180–200 (DYHRALRTCLPSRPLLGLGSS) are Extracellular-facing. The helical transmembrane segment at 201–221 (VIYFLWNLLLLWPRVLAVALF) threads the bilayer. Residues 222–223 (SA) are Cytoplasmic-facing. A helical membrane pass occupies residues 224–244 (LFPSYVALHFLGLWLVLLLWV). The Extracellular segment spans residues 245 to 258 (WLQGTDFMPDPSSE). Residues 259–279 (WLYQVTVATILYFSWFNVAEG) traverse the membrane as a helical segment. Residues 280 to 284 (RTRGR) lie on the Cytoplasmic side of the membrane. A helical transmembrane segment spans residues 285–305 (AIIHFAFLLSDSILLVATWVT). Residues 306–312 (HSSWLPS) lie on the Extracellular side of the membrane. A helical transmembrane segment spans residues 313-333 (GIPLQLWLPVGCGCFFLGLAL). Over 334–395 (RLVYYHWLHP…KDEAALPVKG (62 aa)) the chain is Cytoplasmic. S362 is subject to Phosphoserine. Position 375 is a phosphothreonine (T375).

The protein belongs to the XK family. As to quaternary structure, interacts with BSG and NPTN; which act as chaperones to localize XKR8 at the cell membrane. Homodimer. Post-translationally, undergoes proteolytic processing by caspase-3 (CASP3), leading to its activation. Phosphorylation at Thr-375 activates the phospholipid scramblase activity.

It is found in the cell membrane. Its subcellular location is the cytoplasm. It localises to the perinuclear region. It catalyses the reaction a 1,2-diacyl-sn-glycero-3-phospho-L-serine(in) = a 1,2-diacyl-sn-glycero-3-phospho-L-serine(out). Its activity is regulated as follows. Activated upon caspase cleavage to generate the XK-related protein 8, processed form. Does not act prior the onset of apoptosis. In terms of biological role, phospholipid scramblase that promotes phosphatidylserine exposure on apoptotic cell surface. Phosphatidylserine is a specific marker only present at the surface of apoptotic cells and acts as a specific signal for engulfment. Required for the clearance of apoptotic cells, such as engulfment of apoptotic germ cells by Sertoli cells, clearance of senescent neutrophils or regulation of bipolar cell numbers in the retina. Has no effect on calcium-induced exposure of phosphatidylserine. Promotes myoblast differentiation and survival. This chain is XK-related protein 8, found in Pan troglodytes (Chimpanzee).